The following is a 346-amino-acid chain: Ribonucleoside-diphosphate reductase subunit beta (346 aa).

The Fe cation site is built by Glu-89, Glu-120, and His-123. Tyr-129 is an active-site residue. Residues Glu-193, Glu-227, and His-230 each contribute to the Fe cation site.

It belongs to the ribonucleoside diphosphate reductase small chain family. Tetramer of two alpha and two beta subunits. It depends on Fe cation as a cofactor.

The catalysed reaction is a 2'-deoxyribonucleoside 5'-diphosphate + [thioredoxin]-disulfide + H2O = a ribonucleoside 5'-diphosphate + [thioredoxin]-dithiol. In terms of biological role, provides the precursors necessary for DNA synthesis. Catalyzes the biosynthesis of deoxyribonucleotides from the corresponding ribonucleotides. This is Ribonucleoside-diphosphate reductase subunit beta (nrdB) from Chlamydia muridarum (strain MoPn / Nigg).